We begin with the raw amino-acid sequence, 149 residues long: MADKLTEEQISEFKEAFSLFDKDGDGTITTKELGTVMRSLGQNPTEAELQDMINEIDTDGNGTIDFPEFLTLMARKLKDTDTEEELIEAFRVFDRDGDGYISADELRHVMTNLGEKLTNEEVDEMIREADIDGDGQINYEEFVKMMIAK.

Ala2 carries the N-acetylalanine modification. 4 EF-hand domains span residues 8–43 (EQIS…LGQN), 44–79 (PTEA…KLKD), 81–116 (DTEE…LGEK), and 117–149 (LTNE…MIAK). Residues Asp21, Asp23, Asp25, Thr27, Glu32, Asp57, Asp59, Asn61, Thr63, Glu68, Asp94, Asp96, Asp98, Tyr100, Glu105, Asp130, Asp132, Asp134, Gln136, and Glu141 each contribute to the Ca(2+) site.

The protein belongs to the calmodulin family.

The protein resides in the cytoplasm. In terms of biological role, calmodulin mediates the control of a large number of enzymes, ion channels and other proteins by Ca(2+). Among the enzymes to be stimulated by the calmodulin-Ca(2+) complex are a number of protein kinases and phosphatases. The protein is Calmodulin of Plasmodium falciparum (isolate 3D7).